A 552-amino-acid polypeptide reads, in one-letter code: Gamma-aminobutyric acid receptor subunit alpha-4 (552 aa).

Residues 1–35 (MVSVQKVPAIALCSGVSLALLHFLCLAACLNESPG) form the signal peptide. At 36–259 (QNSKDEKLCP…FHLRRKMGYF (224 aa)) the chain is on the extracellular side. A glycan (N-linked (GlcNAc...) asparagine) is linked at N47. R100 serves as a coordination point for 4-aminobutanoate. N-linked (GlcNAc...) asparagine glycosylation is found at N144 and N157. Position 163 (T163) interacts with 4-aminobutanoate. C172 and C186 are disulfide-bonded. Residues 260–280 (MIQTYIPCIMTVILSQVSFWI) traverse the membrane as a helical segment. Topologically, residues 281-284 (NKES) are cytoplasmic. The chain crosses the membrane as a helical span at residues 285–305 (VPARTVFGITTVLTMTTLSIS). Over 306–318 (ARHSLPKVSYATA) the chain is Extracellular. Residues 319–341 (MDWFIAVCFAFVFSALIEFAAVN) traverse the membrane as a helical segment. The Cytoplasmic segment spans residues 342–515 (YFTNIQMQKA…PPPSGSGTSK (174 aa)). 2 disordered regions span residues 353-480 (KKIS…FGSR) and 492-513 (GAAGNVSATPPPPAPPPSGSGT). Basic and acidic residues predominate over residues 396–406 (SESDVKSRTEV). Polar residues predominate over residues 407 to 422 (GNHSSKTSAVQESSEA). Positions 445-458 (SAAARGLSSAASPS) are enriched in low complexity. Residues 500–509 (TPPPPAPPPS) are compositionally biased toward pro residues. A helical membrane pass occupies residues 516–538 (IDKYARILFPVTFGAFNMVYWVV). Residues 539 to 552 (YLSKDTMEKSESLM) lie on the Extracellular side of the membrane.

The protein belongs to the ligand-gated ion channel (TC 1.A.9) family. Gamma-aminobutyric acid receptor (TC 1.A.9.5) subfamily. GABRA4 sub-subfamily. Heteropentamer, formed by a combination of alpha (GABRA1-6), beta (GABRB1-3), gamma (GABRG1-3), delta (GABRD), epsilon (GABRE), rho (GABRR1-3), pi (GABRP) and theta (GABRQ) chains, each subunit exhibiting distinct physiological and pharmacological properties. Expressed in the brain.

Its subcellular location is the cell membrane. It localises to the postsynaptic cell membrane. The enzyme catalyses chloride(in) = chloride(out). With respect to regulation, potentiated by gaboxadol. Potentiated by histamine. Its function is as follows. Alpha subunit of the heteropentameric ligand-gated chloride channel gated by gamma-aminobutyric acid (GABA), a major inhibitory neurotransmitter in the brain. GABA-gated chloride channels, also named GABA(A) receptors (GABAAR), consist of five subunits arranged around a central pore and contain GABA active binding site(s) located at the alpha and beta subunit interface(s). Alpha-4/GABRA4 subunit often assembles with delta or gamma-2 subunits, in combination with beta subunits. When activated by GABA, GABAARs selectively allow the flow of chloride anions across the cell membrane down their electrochemical gradient. GABAARs containing alpha-4 are predominantly extrasynaptic, contributing to tonic inhibition in dentate granule cells and thalamic relay neurons. Extrasynaptic alpha-4-containing GABAARs control levels of excitability and network activity. GABAAR containing alpha-4-beta-3-delta subunits can simultaneously bind GABA and histamine where histamine binds at the interface of two neighboring beta subunits, which may be involved in the regulation of sleep and wakefulness. The polypeptide is Gamma-aminobutyric acid receptor subunit alpha-4 (Mus musculus (Mouse)).